Here is a 232-residue protein sequence, read N- to C-terminus: Ornithine carbamoyltransferase (232 aa).

Carbamoyl phosphate contacts are provided by residues Gln15, Arg39, and 66–69; that span reads HPTQ. L-ornithine-binding positions include Asn99, Asp163, and 167–168; that span reads SM. Residues 204 to 207 and Thr232 contribute to the carbamoyl phosphate site; that span reads HCLP.

The protein belongs to the aspartate/ornithine carbamoyltransferase superfamily. OTCase family.

It is found in the cytoplasm. It carries out the reaction carbamoyl phosphate + L-ornithine = L-citrulline + phosphate + H(+). It functions in the pathway amino-acid biosynthesis; L-arginine biosynthesis; L-arginine from L-ornithine and carbamoyl phosphate: step 1/3. Its function is as follows. Reversibly catalyzes the transfer of the carbamoyl group from carbamoyl phosphate (CP) to the N(epsilon) atom of ornithine (ORN) to produce L-citrulline. The chain is Ornithine carbamoyltransferase (argF) from Neisseria pharyngis.